The sequence spans 533 residues: MFVASEAFPLAKTGGLADVCASLPKALRALGCDVRVLMPGYAQALDRVLRPRVVAELGEVLPGAAVRIIAGSMPDSGVPVWLLDCPSLYRRAGSLYCGPDDADWADNAYRFGLLCQVAARVALGAAGLRWRPDVVHAHDWHGGLVALLTRGAGDARPKTVFTIHNAAFQGNFALDDAARIGLPADALSVDGVEFYGQLSFLKAGARYADRLTTVSPTYAGEIQTAEFGCGLEGLYAARRDQLSGIMNGIDTELWNPATDRWLPQPYSIDDMGGKAGCKAALQQELGLCADARAPLVASVCRLTSQKMSDIVLERLPEQLAQHPRMQFALHGRGDRALEQGFDALAAQYPRRVAVRIGYDETLAHRIHAGADILLHGARFEPCGLTQLYAMRYGTIPIVRRVGGLADSVVDLDTLAPHSEDATGFVFDAPTGDAMSEALRRCVNLHDARPGVWSALCRLAMARDSSWSRSARAYLDLYAALTPRRRVEASDEARGAAAALARADAASGRRRRAPEQSERLRQERLARQVALASK.

Lys12 serves as a coordination point for ADP-alpha-D-glucose. The tract at residues 497 to 533 (AALARADAASGRRRRAPEQSERLRQERLARQVALASK) is disordered. Basic and acidic residues predominate over residues 512–525 (APEQSERLRQERLA).

The protein belongs to the glycosyltransferase 1 family. Bacterial/plant glycogen synthase subfamily.

The catalysed reaction is [(1-&gt;4)-alpha-D-glucosyl](n) + ADP-alpha-D-glucose = [(1-&gt;4)-alpha-D-glucosyl](n+1) + ADP + H(+). It participates in glycan biosynthesis; glycogen biosynthesis. In terms of biological role, synthesizes alpha-1,4-glucan chains using ADP-glucose. In Burkholderia thailandensis (strain ATCC 700388 / DSM 13276 / CCUG 48851 / CIP 106301 / E264), this protein is Glycogen synthase.